The sequence spans 302 residues: MSTATISPSQIGRGARPDGEGSVQVQMETGAKIGNAKVFAIYGKGGIGKSTTSSNLSVAFSKLGKRVLQIGCDPKHDSTFTLTKRMVPTVIDVLETVNFHPEELRVEDFVFEGTNGVMCVEAGGPPAGTGCGGYVVGQTVKLLKEHHLLEETDVVVFDVLGDVVCGGFAAPLQHADRALIVTANDFDSIFAANRIVQAIGAKAKNYNVRLGGIIANRSDATDQIDKFNERIGMRSLARIPALDVIRKSRLKKATLFEMEESPEVLAVQAEYLQLAQRLWDGVDPLYCEPLKDRDIFDLLGYD.

The segment covering 1 to 10 (MSTATISPSQ) has biased composition (polar residues). Positions 1 to 21 (MSTATISPSQIGRGARPDGEG) are disordered. ATP is bound by residues 46-51 (GIGKST) and Lys75. Ser50 lines the Mg(2+) pocket. Residues Cys131 and Cys165 each coordinate [4Fe-4S] cluster. Residues 216–217 (NR) and 240–242 (PAL) contribute to the ATP site.

The protein belongs to the NifH/BchL/ChlL family. In terms of assembly, homodimer. Protochlorophyllide reductase is composed of three subunits; BchL, BchN and BchB. The cofactor is [4Fe-4S] cluster.

It catalyses the reaction chlorophyllide a + oxidized 2[4Fe-4S]-[ferredoxin] + 2 ADP + 2 phosphate = protochlorophyllide a + reduced 2[4Fe-4S]-[ferredoxin] + 2 ATP + 2 H2O. The protein operates within porphyrin-containing compound metabolism; bacteriochlorophyll biosynthesis (light-independent). Functionally, component of the dark-operative protochlorophyllide reductase (DPOR) that uses Mg-ATP and reduced ferredoxin to reduce ring D of protochlorophyllide (Pchlide) to form chlorophyllide a (Chlide). This reaction is light-independent. The L component serves as a unique electron donor to the NB-component of the complex, and binds Mg-ATP. The polypeptide is Light-independent protochlorophyllide reductase iron-sulfur ATP-binding protein (Rubrivivax gelatinosus (strain NBRC 100245 / IL144)).